The sequence spans 158 residues: C-type lectin (158 aa).

The signal sequence occupies residues 1-23 (MGHFTFISLCLMPIFLSLSGAEC). Cystine bridges form between Cys26–Cys37, Cys54–Cys154, Cys61–Cys156, and Cys129–Cys146. Residues 33–155 (RNGLCYKLFD…CESLFAFICR (123 aa)) enclose the C-type lectin domain. Asn111 and Asn121 each carry an N-linked (GlcNAc...) asparagine glycan. The short motif at 119 to 121 (EPN) is the Mannose-binding element. The Ca(2+) site is built by Glu127, Asn142, and Asp143.

It belongs to the true venom lectin family. As to quaternary structure, homodimer; non-covalently linked. As to expression, expressed by the venom gland.

It is found in the secreted. Mannose-binding lectin which recognizes specific carbohydrate structures and agglutinates a variety of animal cells by binding to cell-surface glycoproteins and glycolipids. May be a calcium-dependent lectin. This chain is C-type lectin, found in Micrurus corallinus (Brazilian coral snake).